The chain runs to 360 residues: COP9 signalosome complex subunit 5 (360 aa).

The MPN domain occupies 60–197 (AKISALALLK…IGAFRTYPKD (138 aa)). Zn(2+) contacts are provided by H143, H145, and D156. A JAMM motif motif is present at residues 143–156 (HSHPGYGCWLSGID). 2 disordered regions span residues 293–315 (LMPS…RDSS) and 341–360 (SNKA…MVEA). Residues 341–350 (SNKASTSAPD) are compositionally biased toward polar residues.

It belongs to the peptidase M67A family. CSN5 subfamily. As to quaternary structure, component of the CSN complex, probably composed of CSN1, CSN2, CSN3, CSN4, CSN5, CSN6, CSN7 and CSN8. Interacts with MCM2.

In terms of biological role, probable protease subunit of the COP9 signalosome complex (CSN), a complex involved in various cellular and developmental processes such as photomorphogenesis and response to hormones. The CSN complex is an essential regulator of the ubiquitin (Ubl) conjugation pathway by mediating the deneddylation of the cullin subunits of SCF-type E3 ligase complexes, leading to decrease the Ubl ligase activity of SCF. Involved in early response to iron deficiency. This is COP9 signalosome complex subunit 5 from Oryza sativa subsp. japonica (Rice).